We begin with the raw amino-acid sequence, 10624 residues long: Extracellular matrix-binding protein ebh (10624 aa).

The first 39 residues, 1-39 (MNYRDKIQKFSIRKYTVGTFSTVIATLVFLGFNTSQAHA), serve as a signal peptide directing secretion. The segment covering 41–59 (ETNQPASVVKQKQQSNNEQ) has biased composition (polar residues). 4 disordered regions span residues 41–152 (ETNQ…GNDN), 250–277 (PQRQ…PRSV), 1347–1372 (NEKA…NATT), and 2418–2438 (TITP…TLTA). Residues 65–78 (SQVQNSQNSQNSQS) are compositionally biased toward low complexity. The segment covering 79-117 (LSATHENEQPNNSQANLVNQKVAQSSTTNDEQPASQNVN) has biased composition (polar residues). Residues 130–140 (PDKEESKHKQN) are compositionally biased toward basic and acidic residues. Polar residues-rich tracts occupy residues 141 to 151 (ESQSANKNGND), 250 to 266 (PQRQ…QTRS), 1360 to 1372 (YRTT…NATT), and 2427 to 2438 (HSVSSNPSTLTA). FIVAR domains lie at 2524 to 2580 (AKNH…VSDA), 2610 to 2666 (SKNN…ISDE), 2687 to 2750 (DTHA…VQSA), 2780 to 2836 (AKTK…IAAE), 2864 to 2919 (AKTQ…IRQN), 2947 to 3002 (AKNQ…INTN), 3030 to 3085 (AKTQ…INDK), 3154 to 3212 (AMTK…VNQK), 3280 to 3339 (AMTG…VNNA), 3407 to 3465 (AMGN…VNRA), 3533 to 3591 (AMGN…VTEA), 3659 to 3717 (AMNT…ITQK), 3785 to 3843 (AMAN…VEAA), 3911 to 3969 (AMGN…VEQA), 4037 to 4095 (AMGQ…VTAA), 4163 to 4221 (AMKG…ITQA), 4289 to 4347 (QMGN…VEAA), 4415 to 4473 (AMAN…VENA), 4541 to 4599 (AMGT…INQI), 4667 to 4725 (AMGQ…VDRA), 4793 to 4851 (AMNS…VDNA), 4919 to 4977 (AMGA…INDM), 5045 to 5103 (AMTA…VNSA), 5171 to 5229 (AMKG…ITQA), 5297 to 5355 (AMHS…VEQA), 5423 to 5481 (AMGQ…VERA), 5549 to 5607 (AMTA…VTNA), 5675 to 5733 (AMKG…INQA), 5801 to 5859 (AMTN…VETA), 6053 to 6111 (AMNQ…INQK), 6179 to 6236 (AMGN…VQAA), 6304 to 6362 (AMGQ…VEAA), 6430 to 6488 (AMQR…VEQA), 6556 to 6614 (AMDQ…VTAA), 6682 to 6740 (AMNQ…VTQA), 6808 to 6866 (AMER…VEAA), 6934 to 6992 (AMGN…VEAA), 7060 to 7118 (AMDK…INQA), 7186 to 7244 (AMGN…VEQA), 7312 to 7370 (AMTQ…ITAA), 7438 to 7496 (AMTQ…IQQA), 7564 to 7622 (AMTN…VEQA), 7690 to 7748 (AMTQ…VAQA), 7816 to 7874 (AMGT…VTKA), 7942 to 8000 (AMGN…ITRA), 8068 to 8129 (AMDQ…ITNE), 8194 to 8252 (AMEL…VNGA), 8320 to 8378 (AMGN…VEQA), 8446 to 8503 (AMHG…INQV), 8571 to 8629 (LMDA…VSSA), 8697 to 8755 (AMKA…IDQA), 8823 to 8881 (AMEA…VEQL), 8949 to 9007 (AMQA…VEQL), 9075 to 9133 (AMET…VEQA), 9201 to 9255 (SMDQ…VDQA), 9323 to 9382 (AMDQ…VIKL), and 9577 to 9633 (AMET…INGA). A helical membrane pass occupies residues 10430–10450 (IKNAIGVVGISGLLASFWFFI). A disordered region spans residues 10527-10624 (RRKEDEEDVE…KKKKSKKNKK (98 aa)). Composition is skewed to basic and acidic residues over residues 10542-10552 (TDEKVLKDNEH) and 10591-10601 (QKDNQSKDKKS). The span at 10606-10624 (TSKKVAAKKKKKKSKKNKK) shows a compositional bias: basic residues.

The protein localises to the cell membrane. The chain is Extracellular matrix-binding protein ebh (ebh) from Staphylococcus aureus (strain JH1).